A 1045-amino-acid polypeptide reads, in one-letter code: B3 domain-containing protein REM13 (1045 aa).

Positions 7-96 form a DNA-binding region, TF-B3 1; it reads YPQFFHTLVP…VFHVSNLGPN (90 aa). The tract at residues 121–147 is disordered; sequence NNGDVCDSEELPKEKKAKTNSEEADAV. Over residues 130–141 the composition is skewed to basic and acidic residues; the sequence is ELPKEKKAKTNS. 2 DNA-binding regions (TF-B3) span residues 157 to 253 and 305 to 398; these read CFMA…FCPT and FVTF…CSPE. The segment at 423–449 is disordered; it reads NRDKISNNDKEENMSWERKKDHLKSRD. Positions 474-570 form a DNA-binding region, TF-B3 4; it reads SNDSCLVVVS…TPVLSLCPAD (97 aa). The tract at residues 606-625 is disordered; the sequence is IKDDNSKEKNDKEESKSVDG. 3 consecutive DNA-binding regions (TF-B3) follow at residues 643–738, 815–910, and 940–1035; these read FVTL…LRTE, FVTF…LRTK, and FVTL…LKFS.

It is found in the nucleus. In Arabidopsis thaliana (Mouse-ear cress), this protein is B3 domain-containing protein REM13 (REM13).